A 294-amino-acid chain; its full sequence is Glycine--tRNA ligase alpha subunit (294 aa).

This sequence belongs to the class-II aminoacyl-tRNA synthetase family. As to quaternary structure, tetramer of two alpha and two beta subunits.

The protein resides in the cytoplasm. The catalysed reaction is tRNA(Gly) + glycine + ATP = glycyl-tRNA(Gly) + AMP + diphosphate. In Polynucleobacter asymbioticus (strain DSM 18221 / CIP 109841 / QLW-P1DMWA-1) (Polynucleobacter necessarius subsp. asymbioticus), this protein is Glycine--tRNA ligase alpha subunit.